An 835-amino-acid polypeptide reads, in one-letter code: Replication origin-binding protein (835 aa).

Residues 54–215 enclose the Helicase ATP-binding domain; it reads PGMSQTRPVT…SGLRGDENIH (162 aa). 67–74 lines the ATP pocket; sequence APMGSGKT.

It belongs to the herpesviridae OriBP family. Homodimer. Interacts with the major DNA-binding protein. Interacts with the helicase/primase component 52 and the polymerase accessory protein.

Its subcellular location is the host nucleus. Functions as a docking protein to recruit essential components of the viral replication machinery to viral DNA origins. In the presence of the major DNA-binding protein, opens dsDNA leading to a conformational change in the origin that facilitates DNA unwinding and subsequent replication. The chain is Replication origin-binding protein from Homo sapiens (Human).